Consider the following 640-residue polypeptide: Chaperone protein HtpG (640 aa).

Residues 1 to 343 are a; substrate-binding; it reads MQTAENIEHL…SSDLPLNVSR (343 aa). The b stretch occupies residues 344–564; it reads EILQESKDID…THDVSGNLGR (221 aa). A c region spans residues 565–640; the sequence is LLKSAGQKVP…LLLQNILSGK (76 aa).

This sequence belongs to the heat shock protein 90 family. In terms of assembly, homodimer.

The protein resides in the cytoplasm. Functionally, molecular chaperone. Has ATPase activity. This is Chaperone protein HtpG from Nitrosomonas europaea (strain ATCC 19718 / CIP 103999 / KCTC 2705 / NBRC 14298).